A 319-amino-acid chain; its full sequence is GTP 3',8-cyclase (319 aa).

The region spanning 4-227 (KHGRKINYLR…VETEKSSTAL (224 aa)) is the Radical SAM core domain. Arg13 provides a ligand contact to GTP. Residues Cys20 and Cys24 each contribute to the [4Fe-4S] cluster site. S-adenosyl-L-methionine is bound at residue Tyr26. A [4Fe-4S] cluster-binding site is contributed by Cys27. Position 63 (Arg63) interacts with GTP. Gly67 contacts S-adenosyl-L-methionine. Thr94 serves as a coordination point for GTP. An S-adenosyl-L-methionine-binding site is contributed by Ser118. Lys155 contacts GTP. Met189 contacts S-adenosyl-L-methionine. Cys249 and Cys252 together coordinate [4Fe-4S] cluster. Residue 254–256 (RVR) participates in GTP binding. Cys266 provides a ligand contact to [4Fe-4S] cluster.

Belongs to the radical SAM superfamily. MoaA family. Monomer and homodimer. Requires [4Fe-4S] cluster as cofactor.

It catalyses the reaction GTP + AH2 + S-adenosyl-L-methionine = (8S)-3',8-cyclo-7,8-dihydroguanosine 5'-triphosphate + 5'-deoxyadenosine + L-methionine + A + H(+). It participates in cofactor biosynthesis; molybdopterin biosynthesis. In terms of biological role, catalyzes the cyclization of GTP to (8S)-3',8-cyclo-7,8-dihydroguanosine 5'-triphosphate. The chain is GTP 3',8-cyclase from Clostridium botulinum (strain ATCC 19397 / Type A).